We begin with the raw amino-acid sequence, 686 residues long: MRLPDLRPWTSLLLVDAALLWLLQGPLGTLLPQGLPGLWLEGTLRLGGLWGLLKLRGLLGFVGTLLLPLCLATPLTVSLRALVAGASRAPPARVASAPWSWLLVGYGAAGLSWSLWAVLSPPGAQEKEQDQVNNKVLMWRLLKLSRPDLPLLVAAFFFLVLAVLGETLIPHYSGRVIDILGGDFDPHAFASAIFFMCLFSFGSSLSAGCRGGCFTYTMSRINLRIREQLFSSLLRQDLGFFQETKTGELNSRLSSDTTLMSNWLPLNANVLLRSLVKVVGLYGFMLSISPRLTLLSLLHMPFTIAAEKVYNTRHQEVLREIQDAVARAGQVVREAVGGLQTVRSFGAEEHEVCRYKEALEQCRQLYWRRDLERALYLLVRRVLHLGVQMLMLSCGLQQMQDGELTQGSLLSFMIYQESVGSYVQTLVYIYGDMLSNVGAAEKVFSYMDRQPNLPSPGTLAPTTLQGVVKFQDVSFAYPNRPDRPVLKGLTFTLRPGEVTALVGPNGSGKSTVAALLQNLYQPTGGQVLLDEKPISQYEHCYLHSQVVSVGQEPVLFSGSVRNNIAYGLQSCEDDKVMAAAQAAHADDFIQEMEHGIYTDVGEKGSQLAAGQKQRLAIARALVRDPRVLILDEATSALDVQCEQALQDWNSRGDRTVLVIAHRLQTVQRAHQILVLQEGKLQKLAQL.

Residues 1–6 are Lumenal-facing; it reads MRLPDL. A helical transmembrane segment spans residues 7-27; it reads RPWTSLLLVDAALLWLLQGPL. At 28–56 the chain is on the cytoplasmic side; the sequence is GTLLPQGLPGLWLEGTLRLGGLWGLLKLR. The helical transmembrane segment at 57–77 threads the bilayer; it reads GLLGFVGTLLLPLCLATPLTV. Topologically, residues 78 to 98 are lumenal; the sequence is SLRALVAGASRAPPARVASAP. The helical transmembrane segment at 99–119 threads the bilayer; that stretch reads WSWLLVGYGAAGLSWSLWAVL. Residues 120-148 are Cytoplasmic-facing; the sequence is SPPGAQEKEQDQVNNKVLMWRLLKLSRPD. Residues 149–169 form a helical membrane-spanning segment; sequence LPLLVAAFFFLVLAVLGETLI. The ABC transmembrane type-1 domain occupies 152-435; it reads LVAAFFFLVL…LVYIYGDMLS (284 aa). Residues 170–187 are Lumenal-facing; that stretch reads PHYSGRVIDILGGDFDPH. The helical transmembrane segment at 188–208 threads the bilayer; that stretch reads AFASAIFFMCLFSFGSSLSAG. At 209–266 the chain is on the cytoplasmic side; the sequence is CRGGCFTYTMSRINLRIREQLFSSLLRQDLGFFQETKTGELNSRLSSDTTLMSNWLPL. A helical transmembrane segment spans residues 267–287; the sequence is NANVLLRSLVKVVGLYGFMLS. Topologically, residues 288–293 are lumenal; the sequence is ISPRLT. A helical membrane pass occupies residues 294–314; that stretch reads LLSLLHMPFTIAAEKVYNTRH. The interval 301 to 389 is part of the peptide-binding site; sequence PFTIAAEKVY…RRVLHLGVQM (89 aa). The Cytoplasmic portion of the chain corresponds to 315 to 374; that stretch reads QEVLREIQDAVARAGQVVREAVGGLQTVRSFGAEEHEVCRYKEALEQCRQLYWRRDLERA. A helical membrane pass occupies residues 375-395; the sequence is LYLLVRRVLHLGVQMLMLSCG. At 396 to 408 the chain is on the lumenal side; the sequence is LQQMQDGELTQGS. A helical transmembrane segment spans residues 409–429; that stretch reads LLSFMIYQESVGSYVQTLVYI. Residues 414-433 are part of the peptide-binding site; it reads IYQESVGSYVQTLVYIYGDM. Residues 430–686 lie on the Cytoplasmic side of the membrane; that stretch reads YGDMLSNVGA…EGKLQKLAQL (257 aa). Positions 468 to 686 constitute an ABC transporter domain; it reads VKFQDVSFAY…EGKLQKLAQL (219 aa). An ATP-binding site is contributed by 503 to 510; the sequence is GPNGSGKS.

Belongs to the ABC transporter superfamily. ABCB family. MHC peptide exporter (TC 3.A.1.209) subfamily. As to quaternary structure, heterodimer of TAP1 and TAP2 (TAP1-TAP2). A component of the peptide loading complex (PLC), interacts via TAPBP with MHCI heterodimer; this interaction mediates peptide-MHCI assembly. Recruits TAPBP in a 1:1 stoichiometry. Interacts with classical MHCI such as HLA-A*02-B2M; this interaction is obligatory for the loading of peptide epitopes. Interacts with non-classical MHCI molecules including HLA-E-B2M and HLA-F-B2M as well as PLC component CALR before the peptide loading. In terms of assembly, (Microbial infection) Interacts with Epstein-Barr virus BLNF2a. (Microbial infection) Interacts with herpes simplex virus US12/ICP47. As to quaternary structure, (Microbial infection) Interacts with adenovirus E3-19K glycoprotein, which binds TAP1-TAP2 and acts as a TAPBP inhibitor, preventing TAP1-TAP2 association with MHCI. It depends on Mg(2+) as a cofactor.

It is found in the endoplasmic reticulum membrane. It catalyses the reaction a peptide antigen(in) + ATP + H2O = a peptide antigen(out) + ADP + phosphate + H(+). Its activity is regulated as follows. Inhibited at high ER lumenal peptide concentrations. With respect to regulation, (Microbial infection) Inhibited by herpes simplex virus US12/ICP47 protein, which blocks the peptide-binding site of TAP1-TAP2. (Microbial infection) Inhibited by human cytomegalovirus US6 glycoprotein, which binds to the lumenal side of TAP1-TAP2 complex and inhibits peptide translocation by specifically blocking ATP-binding and preventing TAP1-TAP2 conformational rearrangement induced by peptide binding. ABC transporter associated with antigen processing. In complex with TAP1 mediates unidirectional translocation of peptide antigens from cytosol to endoplasmic reticulum (ER) for loading onto MHC class I (MHCI) molecules. Uses the chemical energy of ATP to export peptides against the concentration gradient. During the transport cycle alternates between 'inward-facing' state with peptide binding site facing the cytosol to 'outward-facing' state with peptide binding site facing the ER lumen. Peptide antigen binding to ATP-loaded TAP1-TAP2 induces a switch to hydrolysis-competent 'outward-facing' conformation ready for peptide loading onto nascent MHCI molecules. Subsequently ATP hydrolysis resets the transporter to the 'inward facing' state for a new cycle. Typically transports intracellular peptide antigens of 8 to 13 amino acids that arise from cytosolic proteolysis via IFNG-induced immunoproteasome. Binds peptides with free N- and C-termini, the first three and the C-terminal residues being critical. Preferentially selects peptides having a highly hydrophobic residue at position 3 and hydrophobic or charged residues at the C-terminal anchor. Proline at position 2 has the most destabilizing effect. As a component of the peptide loading complex (PLC), acts as a molecular scaffold essential for peptide-MHCI assembly and antigen presentation. The sequence is that of Antigen peptide transporter 2 from Homo sapiens (Human).